Here is a 179-residue protein sequence, read N- to C-terminus: Inner membrane-spanning protein YciB (179 aa).

The next 5 helical transmembrane spans lie at 22–42 (IYAA…YSWV), 50–70 (MALI…FFHN), 76–96 (WKVT…QWVM), 121–141 (LAWA…AFWL), and 149–169 (FKVF…GIYI).

The protein belongs to the YciB family.

It localises to the cell inner membrane. Plays a role in cell envelope biogenesis, maintenance of cell envelope integrity and membrane homeostasis. This is Inner membrane-spanning protein YciB from Shigella boydii serotype 4 (strain Sb227).